Here is a 261-residue protein sequence, read N- to C-terminus: Phosphatidylglycerol--prolipoprotein diacylglyceryl transferase (261 aa).

A run of 7 helical transmembrane segments spans residues 19–39 (VHWY…LALY), 56–76 (LIFY…MLFY), 92–112 (WRGG…TWIF), 126–146 (FVVP…FING), 173–193 (QLYE…WFSA), 199–219 (FAVS…AEFF), and 227–247 (GFVA…MIII). Arg139 is an a 1,2-diacyl-sn-glycero-3-phospho-(1'-sn-glycerol) binding site.

Belongs to the Lgt family.

The protein localises to the cell inner membrane. The catalysed reaction is L-cysteinyl-[prolipoprotein] + a 1,2-diacyl-sn-glycero-3-phospho-(1'-sn-glycerol) = an S-1,2-diacyl-sn-glyceryl-L-cysteinyl-[prolipoprotein] + sn-glycerol 1-phosphate + H(+). It participates in protein modification; lipoprotein biosynthesis (diacylglyceryl transfer). In terms of biological role, catalyzes the transfer of the diacylglyceryl group from phosphatidylglycerol to the sulfhydryl group of the N-terminal cysteine of a prolipoprotein, the first step in the formation of mature lipoproteins. The sequence is that of Phosphatidylglycerol--prolipoprotein diacylglyceryl transferase from Coxiella burnetii (strain Dugway 5J108-111).